The chain runs to 537 residues: MEEVVVPRHGDHHNINIKYGFFIFALTIIQTIFFLQVKFIQIKRWNSTGRFSKFWSQITNPPIWLMVTVWLLIVIFTGGHKISDFSEEYIISAKRYGRMAYCLIPLNIYLVLRPTNSPLLKPGYYLENMSLHKWTSRIIVFCSTIHAAGYVYKWIKEGAILNKPFRFLNLLGVVVFVFLVVLAIISIRPFRRKVYSTFYLIHNVTAWSMVILITFHARPGVTVFAVISLILLGYQLYLRYYSSYMVNSLKVIDIPTSTLQIIKIPQSNKFPNWLPGSHIRLNYTISKFKSWTTASHPFTVVTIPEDSTNNLTLIVRKPNSFVINPLDSYLVTGPYPSLAPPFFTTANIVNIICGGSGISLGLPIYHHFKSINSTVPVKLVWTIRNQNDTFIMNQLDMTGVQVYVTSIGDTNSEQQENQQQAVPLFVIEEEEEEQGHGLLNNDNENGIELQNMPKTNEESSEANSTNSKNNKDNQERKEYFKFGRPKFDEVFAIDDPTTTYDLDNSWVIACGPDELISDAKRWSKDRGYRFYYEKYEM.

7 helical membrane passes run 20–40 (GFFIFALTIIQTIFFLQVKFI), 58–78 (ITNPPIWLMVTVWLLIVIFTG), 95–112 (RYGRMAYCLIPLNIYLVL), 133–155 (KWTSRIIVFCSTIHAAGYVYKWI), 167–187 (FLNLLGVVVFVFLVVLAIISI), 194–216 (VYSTFYLIHNVTAWSMVILITFH), and 221–238 (VTVFAVISLILLGYQLYL). Positions 97–213 (GRMAYCLIPL…VTAWSMVILI (117 aa)) constitute a Ferric oxidoreductase domain. The FAD-binding FR-type domain maps to 187–363 (IRPFRRKVYS…GGSGISLGLP (177 aa)). The segment at 432-475 (EEQGHGLLNNDNENGIELQNMPKTNEESSEANSTNSKNNKDNQE) is disordered.

This sequence belongs to the ferric reductase (FRE) family. AIM14 subfamily.

It is found in the membrane. In terms of biological role, probable cell surface metalloreductase. May be involved in iron or copper homeostasis. The polypeptide is Probable metalloreductase AIM14 (AIM14) (Candida dubliniensis (strain CD36 / ATCC MYA-646 / CBS 7987 / NCPF 3949 / NRRL Y-17841) (Yeast)).